The primary structure comprises 1734 residues: Complement C4-A (1734 aa).

Positions Met-1–Gln-19 are cleaved as a signal peptide. A disulfide bridge links Cys-66 with Cys-95. A glycan (N-linked (GlcNAc...) asparagine) is linked at Asn-224. Cys-633 and Cys-667 are disulfide-bonded. Positions Arg-674 to Arg-677 are excised as a propeptide. 3 disulfides stabilise this stretch: Cys-700/Cys-726, Cys-701/Cys-733, and Cys-714/Cys-734. One can recognise an Anaphylatoxin-like domain in the interval Cys-700 to Cys-734. N-linked (GlcNAc...) asparagine glycosylation is found at Asn-743 and Asn-859. Residues Cys-1002–Gln-1005 constitute a cross-link (isoglutamyl cysteine thioester (Cys-Gln)). Residues Asn-1128 and Asn-1383 are each glycosylated (N-linked (GlcNAc...) asparagine). At Tyr-1409 the chain carries Sulfotyrosine. A propeptide spanning residues Arg-1437–Arg-1443 is cleaved from the precursor. 5 cysteine pairs are disulfide-bonded: Cys-1461-Cys-1525, Cys-1573-Cys-1578, Cys-1585-Cys-1663, Cys-1608-Cys-1732, and Cys-1708-Cys-1717. In terms of domain architecture, NTR spans Cys-1585–Cys-1732.

As to quaternary structure, in absence of complement activation, circulates in blood as a disulfide-linked trimer of an alpha, beta and gamma chain. In terms of assembly, complement C4b is composed of Complement C4b-A, Complement C4 beta and Complement C4 gamma chains that are associated via disulfide bonds. Non-enzymatic component of the C3 convertase, also named C4bC2b, composed of the serine protease complement C2b (C2), as well as complement C4b. Non-enzymatic component of the C5 convertase, also named C4bC2bC3b, composed of the serine protease complement C2b (C2), complement C3b, as well as complement C4b. In terms of processing, prior to secretion, the single-chain precursor is enzymatically cleaved by plasminogen (PLG) to yield non-identical chains alpha, beta and gamma. During activation of the complement systems, the alpha chain is cleaved into C4a and C4b by different proteases depending on the complement pathway: C4b stays linked to the beta and gamma chains, while C4a is released in the plasma. The alpha chain is cleaved by C1S to generate C4a and C4b following activation by the classical complement system. The alpha chain is cleaved to generate C4a and C4b by MASP2 following activation by the lectin complement system. The alpha chain is cleaved by GZMK to generate C4a and C4b following activation by the GZMK complement system. Further degradation of C4b by C1 into the inactive fragments C4c and C4d blocks the generation of C3 convertase. The proteolytic cleavages often are incomplete so that many structural forms can be found in plasma. Post-translationally, upon activation, the internal thioester bond reacts with carbohydrate antigens on the target surface to form amide or ester bonds, leading to covalent association with the surface of pathogens. Complement C4b interacts with complement C3b via a thioester linkage. In terms of processing, N- and O-glycosylated. O-glycosylated with a core 1 or possibly core 8 glycan.

The protein localises to the secreted. It localises to the synapse. It is found in the cell projection. Its subcellular location is the axon. The protein resides in the dendrite. The protein localises to the cell surface. Specifically inhibited by nanobody hC4Nb8, inhibiting the classical complement pathway. Its function is as follows. Precursor of non-enzymatic components of the classical, lectin and GZMK complement pathways, which consist in a cascade of proteins that leads to phagocytosis and breakdown of pathogens and signaling that strengthens the adaptive immune system. In terms of biological role, non-enzymatic component of C3 and C5 convertases. Generated following cleavage by complement proteases (C1S, MASP2 or GZMK, depending on the complement pathway), it covalently attaches to the surface of pathogens, where it acts as an opsonin that marks the surface of antigens for removal. It then recruits the serine protease complement C2b to form the C3 and C5 convertases, which cleave and activate C3 and C5, respectively, the next components of the complement pathways. Complement C4b-A isotype is responsible for effective binding to form amide bonds with immune aggregates or protein antigens, while complement C4b-B isotype catalyzes the transacylation of the thioester carbonyl group to form ester bonds with carbohydrate antigens. Putative humoral mediator released following cleavage by complement proteases (C1S, MASP2 or GZMK, depending on the complement pathway). While it is strongly similar to anaphylatoxins, its role is unclear. Was reported to act as a mediator of local inflammatory process; however these effects were probably due to contamination with C3a and/C5a anaphylatoxins in biological assays. This is Complement C4-A from Mus musculus (Mouse).